The primary structure comprises 326 residues: Intracellular serine protease (326 aa).

The Peptidase S8 domain occupies 23–303; the sequence is PRGVEMIQAP…NGLLYLTAVE (281 aa). Active-site charge relay system residues include Asp-49, His-86, and Ser-244.

It belongs to the peptidase S8 family.

In terms of biological role, involved in the generation of beta- and alpha-amylases from the large amylase precursor. This is Intracellular serine protease (isp) from Paenibacillus polymyxa (Bacillus polymyxa).